The sequence spans 84 residues: Neurotoxin BmK-M10 (84 aa).

The signal sequence occupies residues 1 to 19; it reads MNYLVMISFALLLMKGVES. The 63-residue stretch at 21–83 folds into the LCN-type CS-alpha/beta domain; that stretch reads RDAYIAKPEN…VPIRVPGKCQ (63 aa). 4 disulfides stabilise this stretch: Cys31/Cys82, Cys35/Cys55, Cys41/Cys65, and Cys45/Cys67. A propeptide (removed by a carboxypeptidase) is located at residue Arg84.

As to expression, expressed by the venom gland.

It localises to the secreted. Binds to voltage-dependent sodium channels (Nav) and voltage-dependent delayed rectifier potassium channels and inhibits the inactivation of the activated channels, thereby blocking neuronal transmission. Administration to mice at a dosage of 0.8 mg/kg produces an analgesic effect. This Olivierus martensii (Manchurian scorpion) protein is Neurotoxin BmK-M10.